We begin with the raw amino-acid sequence, 495 residues long: Cytoplasmic alpha-amylase (495 aa).

Positions 104 and 198 each coordinate Ca(2+). Catalysis depends on Asp-235, which acts as the Nucleophile. Position 239 (His-239) interacts with Ca(2+). Glu-265 acts as the Proton donor in catalysis.

Belongs to the glycosyl hydrolase 13 family. In terms of assembly, monomer. Requires Ca(2+) as cofactor.

The protein localises to the cytoplasm. The enzyme catalyses Endohydrolysis of (1-&gt;4)-alpha-D-glucosidic linkages in polysaccharides containing three or more (1-&gt;4)-alpha-linked D-glucose units.. This Escherichia coli (strain K12) protein is Cytoplasmic alpha-amylase (amyA).